The following is a 274-amino-acid chain: Thymidylate synthase (274 aa).

Residue arginine 21 participates in dUMP binding. Histidine 51 is a (6R)-5,10-methylene-5,6,7,8-tetrahydrofolate binding site. 123–124 provides a ligand contact to dUMP; that stretch reads RR. The active-site Nucleophile is the cysteine 156. Residues 176–179, asparagine 187, and 217–219 contribute to the dUMP site; these read RSAD and HIY. Residue aspartate 179 participates in (6R)-5,10-methylene-5,6,7,8-tetrahydrofolate binding. Alanine 273 contributes to the (6R)-5,10-methylene-5,6,7,8-tetrahydrofolate binding site.

Belongs to the thymidylate synthase family. Bacterial-type ThyA subfamily. As to quaternary structure, homodimer.

The protein localises to the cytoplasm. The catalysed reaction is dUMP + (6R)-5,10-methylene-5,6,7,8-tetrahydrofolate = 7,8-dihydrofolate + dTMP. It participates in pyrimidine metabolism; dTTP biosynthesis. Functionally, catalyzes the reductive methylation of 2'-deoxyuridine-5'-monophosphate (dUMP) to 2'-deoxythymidine-5'-monophosphate (dTMP) while utilizing 5,10-methylenetetrahydrofolate (mTHF) as the methyl donor and reductant in the reaction, yielding dihydrofolate (DHF) as a by-product. This enzymatic reaction provides an intracellular de novo source of dTMP, an essential precursor for DNA biosynthesis. The protein is Thymidylate synthase of Flavobacterium psychrophilum (strain ATCC 49511 / DSM 21280 / CIP 103535 / JIP02/86).